The chain runs to 821 residues: Serine/threonine-protein kinase RAD53 (821 aa).

S24 bears the Phosphoserine mark. The region spanning 66 to 116 (WTFGRNPACDYHLGNISRLSNKHFQILLGEDGNLLLNDISTNGTWLNGQKV) is the FHA 1 domain. The residue at position 175 (S175) is a Phosphoserine. In terms of domain architecture, Protein kinase spans 198 to 466 (SIIDEVVGQG…AAKALNHPWI (269 aa)). ATP contacts are provided by residues 204–212 (VGQGAFATV) and K227. D319 (proton acceptor) is an active-site residue. A phosphoserine mark is found at S547 and S560. Residues 601–664 (FFIGRSEDCN…NVSYLNNNRM (64 aa)) form the FHA 2 domain. The tract at residues 735-770 (AAQRANQPSASSSSMSAKKPPVSDTNNNGNNSVLND) is disordered. The span at 742-770 (PSASSSSMSAKKPPVSDTNNNGNNSVLND) shows a compositional bias: low complexity. 2 positions are modified to phosphoserine: S774 and S793. The tract at residues 791–821 (SLSQSQIDPSKKVKRAKLDQTSKGPENLQFS) is disordered. Residues 809–821 (DQTSKGPENLQFS) are compositionally biased toward polar residues.

Belongs to the protein kinase superfamily. CAMK Ser/Thr protein kinase family. CHEK2 subfamily. As to quaternary structure, interacts (via domain FHA 1) with PTC2 (when phosphorylated); the interaction is direct and serves to regulate DNA damage checkpoint signaling. Interacts with PIN4. Autophosphorylated. Phosphorylated in response to DNA double-strand breaks; dephosphorylation is mediated by PTC2 and PTC3.

Its subcellular location is the nucleus. It carries out the reaction L-seryl-[protein] + ATP = O-phospho-L-seryl-[protein] + ADP + H(+). The enzyme catalyses L-threonyl-[protein] + ATP = O-phospho-L-threonyl-[protein] + ADP + H(+). It catalyses the reaction L-tyrosyl-[protein] + ATP = O-phospho-L-tyrosyl-[protein] + ADP + H(+). With respect to regulation, inactivated by dephosphorylation via recruitment of PTC2. Functionally, controls S-phase checkpoint as well as G1 and G2 DNA damage checkpoints. Phosphorylates proteins on serine, threonine, and tyrosine. Prevents entry into anaphase and mitotic exit after DNA damage via regulation of the Polo kinase CDC5. Seems to be involved in the phosphorylation of RPH1. In Saccharomyces cerevisiae (strain ATCC 204508 / S288c) (Baker's yeast), this protein is Serine/threonine-protein kinase RAD53 (RAD53).